The chain runs to 21 residues: 78 kDa dihydrolipoyllysine-residue acetyltransferase component of pyruvate dehydrogenase complex (21 aa).

Belongs to the 2-oxoacid dehydrogenase family. In terms of assembly, forms a 60-polypeptide structural core. Requires (R)-lipoate as cofactor.

The protein localises to the mitochondrion matrix. The enzyme catalyses N(6)-[(R)-dihydrolipoyl]-L-lysyl-[protein] + acetyl-CoA = N(6)-[(R)-S(8)-acetyldihydrolipoyl]-L-lysyl-[protein] + CoA. In terms of biological role, the pyruvate dehydrogenase complex catalyzes the overall conversion of pyruvate to acetyl-CoA and CO(2). It contains multiple copies of three enzymatic components: pyruvate dehydrogenase (E1), dihydrolipoamide acetyltransferase (E2) and lipoamide dehydrogenase (E3). This Solanum tuberosum (Potato) protein is 78 kDa dihydrolipoyllysine-residue acetyltransferase component of pyruvate dehydrogenase complex.